The following is a 367-amino-acid chain: Cyclin-Y-like protein 1 (367 aa).

Phosphoserine is present on residues S73, S111, and S118. The 106-residue stretch at 186–291 folds into the Cyclin N-terminal domain; the sequence is EYFKHDPEHK…FLELLQFNIN (106 aa). At S352 the chain carries Phosphoserine.

Belongs to the cyclin family. Cyclin Y subfamily. Interacts with CDK16; this interaction mutually increases the stability of CDK16 and CCNYL1 and increases the kinase activity of CDK16. In terms of tissue distribution, highly expressed in the testis. Largely restricted to germ cells in the testis.

It is found in the cell membrane. Its function is as follows. Key regulator of Wnt signaling implicated in various biological processes including male fertility, embryonic neurogenesis and cortex development. Activates the cyclin-dependent kinase CDK16, and promotes sperm maturation. This Mus musculus (Mouse) protein is Cyclin-Y-like protein 1.